The following is a 603-amino-acid chain: Proline--tRNA ligase (603 aa).

This sequence belongs to the class-II aminoacyl-tRNA synthetase family. ProS type 1 subfamily. Homodimer.

It localises to the cytoplasm. It carries out the reaction tRNA(Pro) + L-proline + ATP = L-prolyl-tRNA(Pro) + AMP + diphosphate. Catalyzes the attachment of proline to tRNA(Pro) in a two-step reaction: proline is first activated by ATP to form Pro-AMP and then transferred to the acceptor end of tRNA(Pro). As ProRS can inadvertently accommodate and process non-cognate amino acids such as alanine and cysteine, to avoid such errors it has two additional distinct editing activities against alanine. One activity is designated as 'pretransfer' editing and involves the tRNA(Pro)-independent hydrolysis of activated Ala-AMP. The other activity is designated 'posttransfer' editing and involves deacylation of mischarged Ala-tRNA(Pro). The misacylated Cys-tRNA(Pro) is not edited by ProRS. This chain is Proline--tRNA ligase, found in Prochlorococcus marinus (strain SARG / CCMP1375 / SS120).